The primary structure comprises 402 residues: MKLTDLSNPAFLENPYPLYETLRAQAPFVSIGPNALMTGRYSLVDSLLHNRNMGKKYMESMRVRYGDSAADMPLFQAFSRMFITINPPAHTHLRGLVMQAFTGRESESMRPLAIDTAHQLIDNFEQKPSVDLVAEFAFPFPMQIICKMMDVDIGDAVTLGIAVSKIAKVFDPSPMSADELVHASTAYEELAQYFTKLIELRRTHPGTDLISMFLRAEEDGEKLTHDEIVSNVIMLLIAGYETTSNMIGNALIALHRHPEQLALLKSDLSLMPQAVSECLRYDGSVQFTMRAAMDDIEVEGELVPRGTVVFLMLGAANRDPAQFTHPDQLDITRKQGRLQSFGAGIHHCLGYRLALIELECALTTLFERLPHLRLAHLDALNWNQRSNLRGVNTLIVDLHAKN.

C348 provides a ligand contact to heme.

This sequence belongs to the cytochrome P450 family. It depends on heme as a cofactor.

In Xylella fastidiosa (strain 9a5c), this protein is Putative cytochrome P450 133B1 (cyp133B1).